A 153-amino-acid polypeptide reads, in one-letter code: Zinc finger protein GIS2 (153 aa).

CCHC-type zinc fingers lie at residues 4-21 (KACYVCGKIGHLAEDCDS), 23-40 (RLCYNCNKPGHVQTDCTM), 47-64 (KQCYNCGETGHVRSECTV), 65-82 (QRCFNCNQTGHISRECPE), 92-109 (VSCYKCGGPNHMAKDCMK), 116-133 (LKCYTCGQAGHMSRDCQN), and 135-152 (RLCYNCNETGHISKDCPK).

The protein localises to the cytoplasm. In terms of biological role, may act in the sexual differentiation pathway. The chain is Zinc finger protein GIS2 (GIS2) from Saccharomyces cerevisiae (strain ATCC 204508 / S288c) (Baker's yeast).